A 644-amino-acid polypeptide reads, in one-letter code: Transmembrane 9 superfamily member 9 (644 aa).

An N-terminal signal peptide occupies residues 1–27; it reads MEFYRSSRRLQILGSVILLLSIHVAHS. The Lumenal segment spans residues 28–281; sequence FYLPGVAPQD…YLLMSDNQIH (254 aa). Residues 282-302 traverse the membrane as a helical segment; it reads WFSIVNSLMIVLFLSGMVAMI. Over 303–351 the chain is Cytoplasmic; that stretch reads MLRTLYRDISRYNELETQEEAQEETGWKLVHGDVFRPPANSDLLCVYVG. The chain crosses the membrane as a helical span at residues 352–372; it reads TGVQCLGMVLVTMIFAMLGFL. Over 373–377 the chain is Lumenal; that stretch reads SPSNR. A helical membrane pass occupies residues 378-398; that stretch reads GGLMTAMLLLWVFMGLFAGYA. The Cytoplasmic segment spans residues 399-418; that stretch reads SSRLYKMFKGTEWKRIAFRT. Residues 419–439 form a helical membrane-spanning segment; the sequence is AFLFPAVVSAIFFVLNALIWG. At 440–451 the chain is on the lumenal side; that stretch reads QKSSGAVPFGTM. Residues 452–472 form a helical membrane-spanning segment; that stretch reads FALIFLWFGISVPLVFVGAYL. Topologically, residues 473–501 are cytoplasmic; the sequence is GFKKPPLDDPVKTNKIPRQIPEQAWYMNP. The helical transmembrane segment at 502 to 522 threads the bilayer; that stretch reads IFSILIGGILPFGAVFIELFF. The Lumenal portion of the chain corresponds to 523-534; sequence ILTSIWLNQFYY. Residues 535–555 traverse the membrane as a helical segment; sequence IFGFLFLVFVILMVTCAEITI. Residues 556-573 lie on the Cytoplasmic side of the membrane; that stretch reads VLCYFQLCSEDYLWWWRS. The helical transmembrane segment at 574–594 threads the bilayer; the sequence is YLTSGSSAVYLFLYAAFYFFT. Residues 595–600 are Lumenal-facing; it reads KLQITK. A helical transmembrane segment spans residues 601 to 621; sequence LVSAMLYFGYMLIASYAFFVL. The Cytoplasmic portion of the chain corresponds to 622–644; it reads TGTIGFYACLWFTRLIYSSVKID. Residues 633-638 carry the Endoplasmic reticulum export signal motif; sequence FTRLIY. A Golgi retention signal motif is present at residues 642–644; sequence KID.

The protein belongs to the nonaspanin (TM9SF) (TC 9.A.2) family.

The protein localises to the endosome membrane. Its subcellular location is the golgi apparatus membrane. This Arabidopsis thaliana (Mouse-ear cress) protein is Transmembrane 9 superfamily member 9.